The sequence spans 607 residues: Elongation factor 4 (607 aa).

The 183-residue stretch at 11-193 (KSIRNFSIIA…QIVAKVPAPT (183 aa)) folds into the tr-type G domain. Residues 23-28 (DHGKST) and 140-143 (NKID) contribute to the GTP site.

This sequence belongs to the TRAFAC class translation factor GTPase superfamily. Classic translation factor GTPase family. LepA subfamily.

It localises to the cell membrane. It carries out the reaction GTP + H2O = GDP + phosphate + H(+). Required for accurate and efficient protein synthesis under certain stress conditions. May act as a fidelity factor of the translation reaction, by catalyzing a one-codon backward translocation of tRNAs on improperly translocated ribosomes. Back-translocation proceeds from a post-translocation (POST) complex to a pre-translocation (PRE) complex, thus giving elongation factor G a second chance to translocate the tRNAs correctly. Binds to ribosomes in a GTP-dependent manner. The sequence is that of Elongation factor 4 from Exiguobacterium sibiricum (strain DSM 17290 / CCUG 55495 / CIP 109462 / JCM 13490 / 255-15).